Consider the following 531-residue polypeptide: Chaperonin GroEL, chloroplastic (531 aa).

ATP contacts are provided by residues 30 to 33 (TLGP), 87 to 91 (DGTTT), Gly-415, 481 to 483 (NAA), and Asp-497.

It belongs to the chaperonin (HSP60) family. As to quaternary structure, forms a cylinder of 14 subunits composed of two heptameric rings stacked back-to-back. Interacts with the co-chaperonin GroES.

It is found in the plastid. The protein resides in the chloroplast. It carries out the reaction ATP + H2O + a folded polypeptide = ADP + phosphate + an unfolded polypeptide.. In terms of biological role, together with its co-chaperonin GroES, plays an essential role in assisting protein folding. The GroEL-GroES system forms a nano-cage that allows encapsulation of the non-native substrate proteins and provides a physical environment optimized to promote and accelerate protein folding. The polypeptide is Chaperonin GroEL, chloroplastic (Emiliania huxleyi (Coccolithophore)).